The following is a 607-amino-acid chain: MAEKRRGSPCSMLSLKAHAFSVEALIGAEKQQQLQKKRRKLGAEEAAGAVDDGGCSRGGGAGEKGSSEGDEGAALPPPAGATSGPARSGADLERGAAGGCEDGFQQGASPLASPGGSPKGSPARSLARPGTPLPSPQAPRVDLQGAELWKRFHEIGTEMIITKAGRRMFPAMRVKISGLDPHQQYYIAMDIVPVDNKRYRYVYHSSKWMVAGNADSPVPPRVYIHPDSPASGETWMRQVISFDKLKLTNNELDDQGHIILHSMHKYQPRVHVIRKDCGDDLSPIKPVPSGEGVKAFSFPETVFTTVTAYQNQQITRLKIDRNPFAKGFRDSGRNRMGLEALVESYAFWRPSLRTLTFEDIPGIPKQGNASSSTLLQGTGNGVPATHPHLLSGSSCSSPAFHLGPNTSQLCSLAPADYSACARSGLTLNRYSTSLAETYNRLTNQAGETFAPPRTPSYVGVSSSTSVNMSMGGTDGDTFSCPQTSLSMQISGMSPQLQYIMPSPSSNAFATNQTHQGSYNTFRLHSPCALYGYNFSTSPKLAASPEKIVSSQGSFLGSSPSGTMTDRQMLPPVEGVHLLSSGGQQSFFDSRTLGSLTLSSSQVSAHMV.

An Engrailed homology 1 repressor motif is present at residues 18 to 28 (HAFSVEALIGA). The disordered stretch occupies residues 30-141 (KQQQLQKKRR…PLPSPQAPRV (112 aa)). Positions 36–40 (KKRRK) match the Nuclear localization signal motif. A compositionally biased stretch (low complexity) spans 44-53 (EEAAGAVDDG). The T-box DNA-binding region spans 143–330 (LQGAELWKRF…RNPFAKGFRD (188 aa)).

In terms of assembly, homodimer. Can form a heterodimer with TBX15. Interacts with GATA4 and NKX2-5. Interacts with PAX3. Interacts (via engrailed homology 1 repressor motif) with TLE3; this interaction represses TBX18 transcriptional activity. Interacts with SIX1.

The protein localises to the nucleus. Acts as a transcriptional repressor involved in developmental processes of a variety of tissues and organs, including the heart and coronary vessels, the ureter and the vertebral column. Required for embryonic development of the sino atrial node (SAN) head area. This chain is T-box transcription factor TBX18 (TBX18), found in Homo sapiens (Human).